A 164-amino-acid polypeptide reads, in one-letter code: Urocortin-3 (164 aa).

Positions 1–23 (MLMPTYFLLPLLLLLGGPRTSLS) are cleaved as a signal peptide. A propeptide spanning residues 24–121 (HKFYNTGPVF…PDKPKSDRGT (98 aa)) is cleaved from the precursor. The disordered stretch occupies residues 58–120 (SFGHLPTQDP…YPDKPKSDRG (63 aa)). The segment covering 110-120 (LYPDKPKSDRG) has biased composition (basic and acidic residues). Ile-160 is modified (isoleucine amide).

It belongs to the sauvagine/corticotropin-releasing factor/urotensin I family. In terms of assembly, binds with high affinity to CRF receptors 2-alpha and 2-beta. Expressed in some areas of the brain including the hypothalamus, amygdala, and brainstem, but is not evident in the cerebellum, pituitary, or cerebral cortex; it is also expressed peripherally in small intestine and skin.

The protein localises to the secreted. Functionally, suppresses food intake, delays gastric emptying and decreases heat-induced edema. Might represent an endogenous ligand for maintaining homeostasis after stress. The polypeptide is Urocortin-3 (Ucn3) (Mus musculus (Mouse)).